A 474-amino-acid polypeptide reads, in one-letter code: Probable glycine dehydrogenase (decarboxylating) subunit 2 (474 aa).

Lys-262 is modified (N6-(pyridoxal phosphate)lysine).

It belongs to the GcvP family. C-terminal subunit subfamily. As to quaternary structure, the glycine cleavage system is composed of four proteins: P, T, L and H. In this organism, the P 'protein' is a heterodimer of two subunits. Requires pyridoxal 5'-phosphate as cofactor.

It catalyses the reaction N(6)-[(R)-lipoyl]-L-lysyl-[glycine-cleavage complex H protein] + glycine + H(+) = N(6)-[(R)-S(8)-aminomethyldihydrolipoyl]-L-lysyl-[glycine-cleavage complex H protein] + CO2. Its function is as follows. The glycine cleavage system catalyzes the degradation of glycine. The P protein binds the alpha-amino group of glycine through its pyridoxal phosphate cofactor; CO(2) is released and the remaining methylamine moiety is then transferred to the lipoamide cofactor of the H protein. This is Probable glycine dehydrogenase (decarboxylating) subunit 2 from Thermotoga petrophila (strain ATCC BAA-488 / DSM 13995 / JCM 10881 / RKU-1).